A 77-amino-acid chain; its full sequence is U8-lycotoxin-Ls1s (77 aa).

The first 20 residues, 1 to 20 (MKLIIFTGLVLFAIVSLIEA), serve as a signal peptide directing secretion. Residues 21-26 (QAENER) constitute a propeptide that is removed on maturation.

It belongs to the neurotoxin 19 (CSTX) family. 08 (U8-Lctx) subfamily. Contains 4 disulfide bonds. In terms of tissue distribution, expressed by the venom gland.

Its subcellular location is the secreted. The sequence is that of U8-lycotoxin-Ls1s from Lycosa singoriensis (Wolf spider).